Reading from the N-terminus, the 734-residue chain is Probable carboxypeptidase X1 (734 aa).

An N-terminal signal peptide occupies residues 1–20 (MWGLLLALAAFAPAVGPALG). The tract at residues 30–62 (AQPGTTKVPGSTPALHSSPAQPPAETANGTSEQ) is disordered. Polar residues predominate over residues 32-48 (PGTTKVPGSTPALHSSP). N57, N210, N220, and N318 each carry an N-linked (GlcNAc...) asparagine glycan. In terms of domain architecture, F5/8 type C spans 113–274 (TGCPPLGLES…PCLRAEILAC (162 aa)). C115 and C274 are joined by a disulfide. One can recognise a Peptidase M14 domain in the interval 298–621 (QHHNYKAMRK…DALLTYLEQV (324 aa)). The Zn(2+) site is built by H360 and E363. N-linked (GlcNAc...) asparagine glycosylation is found at N428 and N472. A Zn(2+)-binding site is contributed by H498. The Proton donor/acceptor role is filled by E591.

It belongs to the peptidase M14 family. It depends on Zn(2+) as a cofactor.

The protein resides in the secreted. May be involved in cell-cell interactions. No carboxypeptidase activity was found yet. The sequence is that of Probable carboxypeptidase X1 (CPXM1) from Homo sapiens (Human).